The sequence spans 175 residues: Trafficking protein particle complex subunit 20 (175 aa).

It belongs to the TRAPP small subunits family. Sedlin subfamily. In terms of assembly, part of the multisubunit TRAPP (transport protein particle) I complex composed of BET3, BET5, TRS20, TRS23, TRS31 and TRS33. Part of the multisubunit TRAPP (transport protein particle) II complex composed of BET3, BET5, TRS20, TRS23, TRS31, TRS33, TRS65, TRS85, TRS120 and TRS130. Part of the multisubunit TRAPP (transport protein particle) III complex composed of BET3, BET5, TRS20, TRS23, TRS31, TRS33 and TRS85.

It is found in the golgi apparatus. Its subcellular location is the cis-Golgi network. The protein resides in the endoplasmic reticulum. The protein localises to the preautophagosomal structure. In terms of biological role, component of the TRAPP I, TRAPP II and TRAPP III complexes which act as guanine nucleotide exchange factors (GEF) for YPT1. TRAPP I plays a key role in the late stages of endoplasmic reticulum to Golgi traffic. TRAPP II plays a role in intra-Golgi transport. TRAPP III plays a role in autophagosome formation. The polypeptide is Trafficking protein particle complex subunit 20 (TRS20) (Saccharomyces cerevisiae (strain ATCC 204508 / S288c) (Baker's yeast)).